The following is a 367-amino-acid chain: Trans-enoyl reductase ffsC (367 aa).

C55–K58 is a binding site for NADP(+). Substrate is bound at residue T143–L150. NADP(+)-binding positions include S203–N206, Y221, and L268–E269. Residue G288–L292 coordinates substrate. Position 357-358 (V357–S358) interacts with NADP(+).

The protein belongs to the zinc-containing alcohol dehydrogenase family. As to quaternary structure, monomer.

The protein operates within mycotoxin biosynthesis. Trans-enoyl reductase; part of the gene cluster that mediates the biosynthesis of the cytotoxic leucine-containing cytochalasans, including aspochalasin C, aspochalasin E, TMC-169, flavichalasine F, aspergillin PZ, aspochalasin M and flavichalasine G. The first step in the pathway is catalyzed by the hybrid PKS-NRPS ffsA that utilizes 8 units of malonyl-CoA to iteratively assemble the octaketide chain before addition of L-leucine by the C-terminal NRPS modules. Because ffsA lacks a designated enoylreductase (ER) domain, the required activity is provided the enoyl reductase fssC. The methyltransferase (MT) domain of ffsA catalyzes the alpha-methylation at C10 and C14 using S-adenosyl-L-methionine as the methyl-donating cosubstrate. Reduction by the hydrolyase ffsE, followed by dehydration and intra-molecular Diels-Alder cyclization by the Diels-Alderase ffsF then yield the required isoindolone-fused macrocycle. A number of oxidative steps catalyzed by the tailoring cytochrome P450 monooxygenase ffsD, the FAD-linked oxidoreductase ffsJ and the short-chain dehydrogenase/reductase ffsI, are further required to afford the final products. In Aspergillus flavipes, this protein is Trans-enoyl reductase ffsC.